The sequence spans 375 residues: Queuine tRNA-ribosyltransferase (375 aa).

Asp94 (proton acceptor) is an active-site residue. Substrate contacts are provided by residues 94 to 98, Asp148, Gln191, and Gly218; that span reads DSGGF. Residues 249–255 are RNA binding; that stretch reads GVGTPED. Asp268 serves as the catalytic Nucleophile. The interval 273 to 277 is RNA binding; important for wobble base 34 recognition; sequence TRIAR. Zn(2+) is bound by residues Cys306, Cys308, Cys311, and His337.

This sequence belongs to the queuine tRNA-ribosyltransferase family. In terms of assembly, homodimer. Within each dimer, one monomer is responsible for RNA recognition and catalysis, while the other monomer binds to the replacement base PreQ1. Requires Zn(2+) as cofactor.

It carries out the reaction 7-aminomethyl-7-carbaguanine + guanosine(34) in tRNA = 7-aminomethyl-7-carbaguanosine(34) in tRNA + guanine. Its pathway is tRNA modification; tRNA-queuosine biosynthesis. In terms of biological role, catalyzes the base-exchange of a guanine (G) residue with the queuine precursor 7-aminomethyl-7-deazaguanine (PreQ1) at position 34 (anticodon wobble position) in tRNAs with GU(N) anticodons (tRNA-Asp, -Asn, -His and -Tyr). Catalysis occurs through a double-displacement mechanism. The nucleophile active site attacks the C1' of nucleotide 34 to detach the guanine base from the RNA, forming a covalent enzyme-RNA intermediate. The proton acceptor active site deprotonates the incoming PreQ1, allowing a nucleophilic attack on the C1' of the ribose to form the product. After dissociation, two additional enzymatic reactions on the tRNA convert PreQ1 to queuine (Q), resulting in the hypermodified nucleoside queuosine (7-(((4,5-cis-dihydroxy-2-cyclopenten-1-yl)amino)methyl)-7-deazaguanosine). The protein is Queuine tRNA-ribosyltransferase of Caldanaerobacter subterraneus subsp. tengcongensis (strain DSM 15242 / JCM 11007 / NBRC 100824 / MB4) (Thermoanaerobacter tengcongensis).